The chain runs to 376 residues: Erythronate-4-phosphate dehydrogenase (376 aa).

Substrate is bound by residues Ser45 and Thr67. Asp147 is a binding site for NAD(+). Residue Arg209 is part of the active site. Asp233 lines the NAD(+) pocket. Residue Glu238 is part of the active site. His255 acts as the Proton donor in catalysis. Gly258 contributes to the NAD(+) binding site. Substrate is bound at residue Tyr259.

Belongs to the D-isomer specific 2-hydroxyacid dehydrogenase family. PdxB subfamily. Homodimer.

Its subcellular location is the cytoplasm. The catalysed reaction is 4-phospho-D-erythronate + NAD(+) = (R)-3-hydroxy-2-oxo-4-phosphooxybutanoate + NADH + H(+). Its pathway is cofactor biosynthesis; pyridoxine 5'-phosphate biosynthesis; pyridoxine 5'-phosphate from D-erythrose 4-phosphate: step 2/5. Its function is as follows. Catalyzes the oxidation of erythronate-4-phosphate to 3-hydroxy-2-oxo-4-phosphonooxybutanoate. The chain is Erythronate-4-phosphate dehydrogenase from Shewanella sp. (strain MR-7).